A 569-amino-acid chain; its full sequence is Mitochondrial import receptor subunit tomm-70 (569 aa).

The Mitochondrial intermembrane segment spans residues 1–12 (MVETTGISDQTK). The chain crosses the membrane as a helical span at residues 13–32 (KVLIGVAAAATVAGVGYLVY). At 33–569 (KSFGGSDLER…KRAAEMLDMY (537 aa)) the chain is on the cytoplasmic side. TPR repeat units follow at residues 44–77 (LEEI…AGPN), 119–152 (TKAY…DSSL), 221–254 (DQKQ…PPAM), and 510–544 (LHLL…APPR).

The protein belongs to the Tom70 family. As to quaternary structure, forms part of the preprotein translocase complex of the outer mitochondrial membrane (TOM complex). As to expression, expressed in body wall muscle cells, the pharynx and structures in the tail.

The protein resides in the mitochondrion outer membrane. Functionally, receptor that accelerates the import of all mitochondrial precursor proteins. This Caenorhabditis elegans protein is Mitochondrial import receptor subunit tomm-70.